The primary structure comprises 489 residues: Probable anthranilate synthase component 1 (489 aa).

Residues serine 54 and 262 to 264 (PYM) each bind L-tryptophan. 297 to 298 (GT) is a chorismate binding site. Glutamate 324 lines the Mg(2+) pocket. 2 positions are modified to phosphoserine: serine 390 and serine 392. Chorismate is bound by residues tyrosine 412, arginine 433, 447–449 (GGG), and glycine 449. Position 462 (glutamate 462) interacts with Mg(2+). Serine 488 carries the post-translational modification Phosphoserine.

The protein belongs to the anthranilate synthase component I family. Tetramer of two components I and two components II. Mg(2+) serves as cofactor.

The catalysed reaction is chorismate + L-glutamine = anthranilate + pyruvate + L-glutamate + H(+). It participates in amino-acid biosynthesis; L-tryptophan biosynthesis; L-tryptophan from chorismate: step 1/5. The protein is Probable anthranilate synthase component 1 (trp3) of Schizosaccharomyces pombe (strain 972 / ATCC 24843) (Fission yeast).